The sequence spans 222 residues: Adenylate kinase (222 aa).

10 to 15 contacts ATP; that stretch reads GAGKGT. An NMP region spans residues 30-59; it reads STGDMLRAAVKAGTPLGIEAKKVMDAGGLV. AMP is bound by residues threonine 31, arginine 36, 57 to 59, 85 to 88, and glutamine 92; these read GLV and GFPR. An LID region spans residues 122–159; it reads GRRVHVASGRTYHVKYNPPKTEGVDDESGEPLIQRDDD. ATP is bound by residues arginine 123 and 132–133; that span reads TY. Positions 138 to 160 are disordered; that stretch reads NPPKTEGVDDESGEPLIQRDDDK. Positions 156 and 167 each coordinate AMP. Residue glycine 207 participates in ATP binding.

Belongs to the adenylate kinase family. Monomer.

Its subcellular location is the cytoplasm. It carries out the reaction AMP + ATP = 2 ADP. It participates in purine metabolism; AMP biosynthesis via salvage pathway; AMP from ADP: step 1/1. In terms of biological role, catalyzes the reversible transfer of the terminal phosphate group between ATP and AMP. Plays an important role in cellular energy homeostasis and in adenine nucleotide metabolism. This chain is Adenylate kinase, found in Ralstonia pickettii (strain 12J).